The sequence spans 190 residues: MDNQAKLSLDLLLGLSIFLTTFLFVANFLPGIFADVRHEIALGSHAYRVAALLVEDPGYPDDWCTAVDTSNCISKEFRPGLAIFDENNGTEYNYLNTSKIFKLQELLSNSACRDTVRNYLGLNSTNFKYKFYFSLKYLNDTEIVSGGDNLPEMGNIIKFDRLVYVDNCTAIPCESIAERCVCKLEVAVWI.

The helical transmembrane segment at 12–34 (LLGLSIFLTTFLFVANFLPGIFA) threads the bilayer.

It localises to the membrane. This is an uncharacterized protein from Archaeoglobus fulgidus (strain ATCC 49558 / DSM 4304 / JCM 9628 / NBRC 100126 / VC-16).